The sequence spans 1098 residues: WD repeat-containing protein 72 (1098 aa).

WD repeat units follow at residues alanine 15 to alanine 54, glycine 60 to lysine 102, tryptophan 158 to glutamine 196, glutamate 315 to phenylalanine 359, alanine 399 to leucine 438, glycine 456 to lysine 501, leucine 504 to arginine 549, and lysine 552 to histidine 591. Serine 1077 and serine 1079 each carry phosphoserine.

The protein resides in the cytoplasmic vesicle. Plays a major role in formation of tooth enamel. Specifically required during the maturation phase of amelogenesis for normal formation of the enamel matrix and clearance of enamel proteins. May be involved in localization of the calcium transporter SLC24A4 to the ameloblast cell membrane. The sequence is that of WD repeat-containing protein 72 (WDR72) from Pongo abelii (Sumatran orangutan).